A 154-amino-acid polypeptide reads, in one-letter code: Ribonuclease H (154 aa).

Positions 1-142 (MRKQIEIFTD…CDELAKQGAE (142 aa)) constitute an RNase H type-1 domain. Aspartate 10, glutamate 48, aspartate 70, and aspartate 134 together coordinate Mg(2+).

The protein belongs to the RNase H family. As to quaternary structure, monomer. Requires Mg(2+) as cofactor.

It is found in the cytoplasm. It catalyses the reaction Endonucleolytic cleavage to 5'-phosphomonoester.. Its function is as follows. Endonuclease that specifically degrades the RNA of RNA-DNA hybrids. The protein is Ribonuclease H of Actinobacillus succinogenes (strain ATCC 55618 / DSM 22257 / CCUG 43843 / 130Z).